The primary structure comprises 194 residues: uncharacterized protein (194 aa).

Residues 1-20 (MLYKFTVLLLIYSYLRNLQA) form the signal peptide. N-linked (GlcNAc...) asparagine; by host glycans are attached at residues Asn31, Asn72, Asn133, and Asn157.

This is an uncharacterized protein from Ostreid herpesvirus 1 (isolate France) (OsHV-1).